Reading from the N-terminus, the 149-residue chain is Ribosome maturation factor RimP (149 aa).

This sequence belongs to the RimP family.

The protein localises to the cytoplasm. Functionally, required for maturation of 30S ribosomal subunits. The sequence is that of Ribosome maturation factor RimP from Clostridium acetobutylicum (strain ATCC 824 / DSM 792 / JCM 1419 / IAM 19013 / LMG 5710 / NBRC 13948 / NRRL B-527 / VKM B-1787 / 2291 / W).